We begin with the raw amino-acid sequence, 916 residues long: Transmembrane channel-like protein 2-A (916 aa).

Basic and acidic residues predominate over residues 1–13 (MPKKSDTTRKLED). The disordered stretch occupies residues 1 to 159 (MPKKSDTTRK…DEEDESMSEG (159 aa)). Residues 1-271 (MPKKSDTTRK…IFLRWMYGMN (271 aa)) are Cytoplasmic-facing. Over residues 14–26 (VGIEIDGDVDSAE) the composition is skewed to acidic residues. Composition is skewed to basic residues over residues 31 to 45 (SKGKGGKKAAGGKRG) and 62 to 72 (KGRRAANKKKP). Basic and acidic residues predominate over residues 97–107 (NVRERGDGDKK). Residues 108-117 (KSGKKGRRGG) show a composition bias toward basic residues. A compositionally biased stretch (basic and acidic residues) spans 118–138 (KKNEKGKGKDSDKDSDKDEKK). Acidic residues predominate over residues 145–157 (DESDSDEEDESMS). A helical transmembrane segment spans residues 272–292 (LVLFSLTFGLVVIPEVLMGLP). Over 293–344 (YGSIPRKTVPREDQDTAMDYSVLTDFNGYCKYSVLFYGYYNNQRTIGFLKFR) the chain is Extracellular. Residues 345–365 (LPLSYLMVGIGTFGYSLMVVI) form a helical membrane-spanning segment. The Cytoplasmic portion of the chain corresponds to 366–438 (RTMAKNADVG…ENIHLRRFLR (73 aa)). A helical membrane pass occupies residues 439-459 (VLANFLITCTLGGSGYLIYFV). Residues 460-478 (VKRSQEFQNMDNLSWYEKN) lie on the Extracellular side of the membrane. The chain crosses the membrane as a helical span at residues 479 to 499 (ELEIIMSLLGLVGPMLFETIA). At 500–516 (ELEEYHPRIALKWQLGR) the chain is on the cytoplasmic side. Residues 517–537 (IFALFLGNLYTFLLALFDEVN) form a helical membrane-spanning segment. The Extracellular segment spans residues 538-649 (AKLEEEESIK…EFDISGNVLG (112 aa)). A helical transmembrane segment spans residues 650-670 (LVFNQGMIWMGAFYAPGLVGI). Residues 671–704 (NVLRLLSSMYYQCWAVMACNVPHERVFKASKSNN) lie on the Cytoplasmic side of the membrane. The helical transmembrane segment at 705–725 (FYMGLLLLILFLSLLPVVYTI) threads the bilayer. Over 726-762 (MSLPPSFDCGPFSGKERMFDVVMETIDLDLPAFMGTL) the chain is Extracellular. The helical transmembrane segment at 763 to 783 (FGYVANPGLVISAVLLMVLAI) threads the bilayer. At 784-916 (YYLNSVSEAY…RGQGPPPRRQ (133 aa)) the chain is on the cytoplasmic side. Residues 804-818 (MQMARDEEKNRRNNK) are compositionally biased toward basic and acidic residues. The tract at residues 804–916 (MQMARDEEKN…RGQGPPPRRQ (113 aa)) is disordered. The segment covering 883–892 (ARGPVTRAPG) has biased composition (low complexity).

It belongs to the TMC family. Interacts (via N-terminus) with both isoforms CD1 and CD3 of PCDH15A (via cytoplasmic domain); this interaction is required for mechanotransduction of the hair cells and correct localization of PCDH15A in hair bundles of the hair cells. As to expression, in adults, expression is restricted to the hair cells of inner ear and lateral line organ. Expressed at higher levels in the larval inner ear than in the lateral-line neuromasts.

The protein resides in the cell membrane. It catalyses the reaction Ca(2+)(in) = Ca(2+)(out). Pore-forming subunit of the mechanotransducer (MET) non-selective cation channel complex located at tips of hair-cell stereocilia. Highly permeable to calcium and likely transports monovalent cations. The chain is Transmembrane channel-like protein 2-A from Danio rerio (Zebrafish).